A 329-amino-acid polypeptide reads, in one-letter code: DNA-directed RNA polymerase subunit alpha (329 aa).

The segment at 1–235 is alpha N-terminal domain (alpha-NTD); the sequence is MQGSVTEFLK…EQLEAFVDLR (235 aa). Residues 249-329 form an alpha C-terminal domain (alpha-CTD) region; the sequence is FDPILLRPVD…NWPPASIADE (81 aa).

This sequence belongs to the RNA polymerase alpha chain family. As to quaternary structure, homodimer. The RNAP catalytic core consists of 2 alpha, 1 beta, 1 beta' and 1 omega subunit. When a sigma factor is associated with the core the holoenzyme is formed, which can initiate transcription.

It carries out the reaction RNA(n) + a ribonucleoside 5'-triphosphate = RNA(n+1) + diphosphate. DNA-dependent RNA polymerase catalyzes the transcription of DNA into RNA using the four ribonucleoside triphosphates as substrates. The protein is DNA-directed RNA polymerase subunit alpha of Cronobacter sakazakii (strain ATCC BAA-894) (Enterobacter sakazakii).